A 256-amino-acid polypeptide reads, in one-letter code: Probable aquaporin TIP-type alpha (256 aa).

Over 1–24 the chain is Cytoplasmic; it reads MATRRYSFGRTDEATHPDSMRASL. The residue at position 7 (Ser7) is a Phosphoserine; by CPK. A helical membrane pass occupies residues 25-44; that stretch reads AEFASTFIFVFAGEGSGLAL. Residues 45-57 are Vacuolar-facing; sequence VKIYQDSAFSAGE. A helical transmembrane segment spans residues 58 to 77; it reads LLALALAHAFALFAAVSASM. The Cytoplasmic portion of the chain corresponds to 78–102; it reads HVSGGHVNPAVSFGALIGGRISVIR. The short motif at 85 to 87 is the NPA 1 element; it reads NPA. A helical transmembrane segment spans residues 103-121; it reads AVYYWIAQLLGSIVAALVL. Over 122–143 the chain is Vacuolar; sequence RLVTNNMRPSGFHVSPGVGVGH. Residues 144–164 traverse the membrane as a helical segment; sequence MFILEVVMTFGLMYTVYGTAI. The Cytoplasmic portion of the chain corresponds to 165-169; that stretch reads DPKRG. Residues 170–189 form a helical membrane-spanning segment; that stretch reads AVSYIAPLAIGLIVGANILV. Residues 190 to 216 are Vacuolar-facing; the sequence is GGPFDGACMNPALAFGPSLVGWQWHQH. Positions 199 to 201 match the NPA 2 motif; that stretch reads NPA. The chain crosses the membrane as a helical span at residues 217–239; the sequence is WIFWVGPLLGAALAALVYEYAVI. The Cytoplasmic segment spans residues 240–256; it reads PIEPPPHHHQPLATEDY.

The protein belongs to the MIP/aquaporin (TC 1.A.8) family. TIP (TC 1.A.8.10) subfamily. Phosphorylated by a tonoplast-bound calcium-dependent protein kinase. In terms of tissue distribution, found in all seed tissues that are alive at seed maturity, but not in tissues that lose viability during seed maturation.

It is found in the vacuole membrane. Functionally, channel protein in tonoplast. These proteins may allow the diffusion of amino acids and/or peptides from the vacuolar compartment to the cytoplasm. The sequence is that of Probable aquaporin TIP-type alpha from Phaseolus vulgaris (Kidney bean).